Here is an 881-residue protein sequence, read N- to C-terminus: Plakophilin-2 (881 aa).

The segment at 1–348 (MAAPGAPAEY…FTDSQLGNAD (348 aa)) is required for interaction with influenza A virus RNA polymerase subunit PB1. The interval 1-360 (MAAPGAPAEY…MTLERAVSML (360 aa)) is required for binding to single-stranded DNA. Position 44 is a phosphoserine (S44). Omega-N-methylarginine is present on R46. S82 carries the phosphoserine; by MARK3 modification. Residues S132, S135, S151, S154, S155, S169, and S172 each carry the phosphoserine modification. T177 bears the Phosphothreonine mark. Phosphoserine occurs at positions 183, 197, 251, 294, and 329. The disordered stretch occupies residues 282 to 314 (QNRASRSSWHQSSFHSTRTLREAGPSVAVDSSG). Residues 286 to 297 (SRSSWHQSSFHS) are compositionally biased toward low complexity. ARM repeat units lie at residues 341 to 383 (DSQL…ECFQ), 385 to 424 (SEAR…NLVF), 427 to 467 (NDNK…NLRS), 571 to 616 (DGRK…NLSY), 671 to 711 (PKGV…NLTA), 719 to 758 (SVAQ…NLSR), 763 to 804 (QNEI…NIIQ), and 807 to 849 (YQNA…SLWA).

Belongs to the beta-catenin family. As to quaternary structure, interacts with DSC2. Interacts with JUP. Interacts with KRT5/CK5, KRT8/CK8, KRT14/CK14, KRT18/CK18 and VIM. Interacts (via N-terminus) with MARK3/C-TAK1. Interacts with DSP. Interacts with DSG1, DSG2 and DSG3. Interacts (via N-terminus) with CTNNB1. Interacts with CDH1. Interacts with the RNA polymerase III (Pol III) complex proteins POLR3A/RPC155, POLR3F/RPC39 and POLR3C/RPC82. Interacts with CTNNA3. Interacts (via N-terminus) with SCN5A/Nav1.5. Interacts with ANK3/ANKG and GJA1/CX43. In terms of assembly, (Microbial infection) Interacts (via N-terminus) with influenza A virus RNA polymerase subunit PB1 (via C-terminus); the interaction competitively inhibits the interaction between the subunits PB1 and PB2. In terms of tissue distribution, expressed at intercalated disks in the heart (at protein level). Expressed in gingival epithelial, endothelial and fibroblast cells (at protein level). Faintly expressed in tracheal epithelial cells (at protein level). Widely expressed. Found at desmosomal plaques in simple and stratified epithelia and in non-epithelial tissues such as myocardium and lymph node follicles. In most stratified epithelia found in the desmosomes of the basal cell layer and seems to be absent from suprabasal strata. (Microbial infection) Abundantly expressed in tracheal epithelial cells following influenza A virus infection (at protein level).

The protein localises to the nucleus. The protein resides in the cell junction. It localises to the desmosome. It is found in the cytoplasm. A component of desmosome cell-cell junctions which are required for positive regulation of cellular adhesion. Regulates focal adhesion turnover resulting in changes in focal adhesion size, cell adhesion and cell spreading, potentially via transcriptional modulation of beta-integrins. Required to maintain gingival epithelial barrier function. Important component of the desmosome that is also required for localization of desmosome component proteins such as DSC2, DSG2 and JUP to the desmosome cell-cell junction. Required for the formation of desmosome cell junctions in cardiomyocytes, thereby required for the correct formation of the heart, specifically trabeculation and formation of the atria walls. Loss of desmosome cell junctions leads to mis-localization of DSP and DSG2 resulting in disruption of cell-cell adhesion and disordered intermediate filaments. Modulates profibrotic gene expression in cardiomyocytes via regulation of DSP expression and subsequent activation of downstream TGFB1 and MAPK14/p38 MAPK signaling. Required for cardiac sodium current propagation and electrical synchrony in cardiac myocytes, via ANK3 stabilization and modulation of SCN5A/Nav1.5 localization to cell-cell junctions. Required for mitochondrial function, nuclear envelope integrity and positive regulation of SIRT3 transcription via maintaining DES localization at its nuclear envelope and cell tip anchoring points, and thereby preserving regulation of the transcriptional program. Maintenance of nuclear envelope integrity protects against DNA damage and transcriptional dysregulation of genes, especially those involved in the electron transport chain, thereby preserving mitochondrial function and protecting against superoxide radical anion generation. Binds single-stranded DNA (ssDNA). May regulate the localization of GJA1 to gap junctions in intercalated disks of the heart. Involved in the inhibition of viral infection by influenza A viruses (IAV). Acts as a host restriction factor for IAV viral propagation, potentially via disrupting the interaction of IAV polymerase complex proteins. The polypeptide is Plakophilin-2 (Homo sapiens (Human)).